Here is a 481-residue protein sequence, read N- to C-terminus: Argininosuccinate lyase (481 aa).

Belongs to the lyase 1 family. Argininosuccinate lyase subfamily.

The protein resides in the cytoplasm. It catalyses the reaction 2-(N(omega)-L-arginino)succinate = fumarate + L-arginine. It functions in the pathway amino-acid biosynthesis; L-arginine biosynthesis; L-arginine from L-ornithine and carbamoyl phosphate: step 3/3. This is Argininosuccinate lyase from Methanococcus maripaludis (strain C6 / ATCC BAA-1332).